A 226-amino-acid polypeptide reads, in one-letter code: uncharacterized protein (226 aa).

The N-acetyltransferase domain maps to 18–219 (LTIRNYTETD…YGVLMEWKNV (202 aa)).

The protein belongs to the acetyltransferase family.

This is an uncharacterized protein from Bacillus subtilis (strain 168).